Here is a 70-residue protein sequence, read N- to C-terminus: Protein SlyX homolog (70 aa).

Belongs to the SlyX family.

The polypeptide is Protein SlyX homolog (Pseudoalteromonas atlantica (strain T6c / ATCC BAA-1087)).